The sequence spans 325 residues: tRNA U34 carboxymethyltransferase (325 aa).

Carboxy-S-adenosyl-L-methionine is bound by residues lysine 91, tryptophan 105, lysine 110, glycine 130, 152 to 154, methionine 196, tyrosine 200, and arginine 315; that span reads DPS.

Belongs to the class I-like SAM-binding methyltransferase superfamily. CmoB family. In terms of assembly, homotetramer.

The catalysed reaction is carboxy-S-adenosyl-L-methionine + 5-hydroxyuridine(34) in tRNA = 5-carboxymethoxyuridine(34) in tRNA + S-adenosyl-L-homocysteine + H(+). Functionally, catalyzes carboxymethyl transfer from carboxy-S-adenosyl-L-methionine (Cx-SAM) to 5-hydroxyuridine (ho5U) to form 5-carboxymethoxyuridine (cmo5U) at position 34 in tRNAs. The chain is tRNA U34 carboxymethyltransferase from Aeromonas salmonicida (strain A449).